Reading from the N-terminus, the 979-residue chain is Protocadherin alpha-9 (979 aa).

The first 59 residues, 1–59 (MRLGNRPEDIRTCVHLRWHIHGLLRQENASVVISKCLRHGAWRLLLWLLLLATWDVGSG), serve as a signal peptide directing secretion. Residues 60-726 (QLHYSVPEEA…RREASLMDVN (667 aa)) lie on the Extracellular side of the membrane. 6 Cadherin domains span residues 64-163 (SVPE…PPIF), 164-272 (SVAE…APVF), 273-380 (DRSV…APEI), 381-485 (VLTS…APAF), 486-595 (AHPE…PPTL), and 611-707 (VSRS…VPKA). N-linked (GlcNAc...) asparagine glycans are attached at residues Asn287 and Asn295. An N-linked (GlcNAc...) asparagine glycan is attached at Asn578. Residues 727–747 (VYLIIAICAVSSLLVLTLLLY) form a helical membrane-spanning segment. Residues 748 to 979 (TALRCSAVPM…GNSTTDNSDQ (232 aa)) are Cytoplasmic-facing. 5 PXXP repeats span residues 763–766 (LGKP), 828–831 (PRQP), 861–864 (PGGP), 902–905 (PGNP), and 920–923 (PGSP). The 5 X 4 AA repeats of P-X-X-P stretch occupies residues 763 to 923 (LGKPTLVCSS…PDKFIIPGSP (161 aa)). The tract at residues 859–979 (AGPGGPDQQW…GNSTTDNSDQ (121 aa)) is disordered. The segment covering 938-952 (DKSDFITFGKKEETK) has biased composition (basic and acidic residues).

The protein resides in the cell membrane. Potential calcium-dependent cell-adhesion protein. May be involved in the establishment and maintenance of specific neuronal connections in the brain. The sequence is that of Protocadherin alpha-9 from Mus musculus (Mouse).